Consider the following 606-residue polypeptide: Aspartate--tRNA(Asp/Asn) ligase (606 aa).

Glu177 is a binding site for L-aspartate. Positions 201-204 (QLFK) are aspartate. Arg223 is an L-aspartate binding site. ATP-binding positions include 223-225 (RDE) and Gln232. His461 lines the L-aspartate pocket. Glu499 contributes to the ATP binding site. Arg506 is an L-aspartate binding site. Residue 551–554 (GLDR) coordinates ATP.

This sequence belongs to the class-II aminoacyl-tRNA synthetase family. Type 1 subfamily. Homodimer.

The protein resides in the cytoplasm. The enzyme catalyses tRNA(Asx) + L-aspartate + ATP = L-aspartyl-tRNA(Asx) + AMP + diphosphate. Aspartyl-tRNA synthetase with relaxed tRNA specificity since it is able to aspartylate not only its cognate tRNA(Asp) but also tRNA(Asn). Reaction proceeds in two steps: L-aspartate is first activated by ATP to form Asp-AMP and then transferred to the acceptor end of tRNA(Asp/Asn). The sequence is that of Aspartate--tRNA(Asp/Asn) ligase from Prochlorococcus marinus (strain NATL2A).